Reading from the N-terminus, the 235-residue chain is Ribitol-5-phosphate cytidylyltransferase (235 aa).

CTP-binding positions include 7-10 (LAGG), 82-88 (GADRNTS), and serine 113.

Belongs to the IspD/TarI cytidylyltransferase family. TarI subfamily.

The catalysed reaction is D-ribitol 5-phosphate + CTP + H(+) = CDP-L-ribitol + diphosphate. Its pathway is cell wall biogenesis; poly(ribitol phosphate) teichoic acid biosynthesis. Its function is as follows. Catalyzes the transfer of the cytidylyl group of CTP to D-ribitol 5-phosphate. The sequence is that of Ribitol-5-phosphate cytidylyltransferase from Streptococcus pneumoniae serotype 2 (strain D39 / NCTC 7466).